The primary structure comprises 295 residues: Protoheme IX farnesyltransferase (295 aa).

9 helical membrane passes run 9 to 29, 36 to 56, 80 to 100, 108 to 128, 135 to 155, 163 to 183, 209 to 229, 230 to 250, and 265 to 285; these read ITKPGIIFGNVLSVAGGFFLA, FGVFLAAVIGTSLVVASGCVF, LVSLKLALLYATILGVAGVAL, LAALFAVIGFVIYVGLYSLYL, GTLVGSLSGAMPPVIGYCAVT, LTLLVMFSLWQMPHSYAIAIF, IMLYILAFLVATLMLTVGGYA, GLNYLAVAAGMGMYWLYMAWK, and FVFSIFTITALSVMMSVDFQV.

The protein belongs to the UbiA prenyltransferase family. Protoheme IX farnesyltransferase subfamily.

It localises to the cell inner membrane. The catalysed reaction is heme b + (2E,6E)-farnesyl diphosphate + H2O = Fe(II)-heme o + diphosphate. It functions in the pathway porphyrin-containing compound metabolism; heme O biosynthesis; heme O from protoheme: step 1/1. Converts heme B (protoheme IX) to heme O by substitution of the vinyl group on carbon 2 of heme B porphyrin ring with a hydroxyethyl farnesyl side group. The protein is Protoheme IX farnesyltransferase of Pseudomonas savastanoi pv. phaseolicola (strain 1448A / Race 6) (Pseudomonas syringae pv. phaseolicola (strain 1448A / Race 6)).